The chain runs to 312 residues: Zinc transporter ZitB (312 aa).

Helical transmembrane passes span 16–36 (LLIA…GGWL), 40–60 (LALL…FIAL), 81–101 (LTTL…ILIV), 117–137 (TPML…FWIL), 153–173 (LHVL…IVIL), and 177–197 (WTPI…RNAW).

This sequence belongs to the cation diffusion facilitator (CDF) transporter (TC 2.A.4) family. SLC30A subfamily.

It localises to the cell inner membrane. In terms of biological role, involved in zinc efflux across the cytoplasmic membrane, thus reducing zinc accumulation in the cytoplasm and rendering bacteria more resistant to zinc. It may contribute to zinc homeostasis at low concentrations of zinc. The polypeptide is Zinc transporter ZitB (Yersinia pseudotuberculosis serotype I (strain IP32953)).